A 290-amino-acid chain; its full sequence is MFRLLSSCCSCLRTTEETRRNVTIPIIGLNNSGKTVLVEAFQKLLPSKTDHCMKSELTTLLLDEYELSIYDLNGDLKGREAWPNYYAQAHGLVFVLDSSDIRRMQEVKIILTHLLSDKRVAGKPILILANKQDKKKALMPCDIIDYLLLKKLVKENKCPCRVEPCSAIRNLERRNHQPIVEGLRWLLAVIDTCQLPPTSSISISKNNTGSGERCSSHSFSTRTGMSKEKRQHLEQCSIEAKPLKSILQKEGTRLWSKKNMSVTFALDEPMKEGECSRRMRAQNTTKLCYN.

Residues 28 to 35, 71 to 75, and 130 to 133 contribute to the GTP site; these read GLNNSGKT, DLNGD, and NKQD. A disordered region spans residues 204–226; that stretch reads SKNNTGSGERCSSHSFSTRTGMS.

Belongs to the small GTPase superfamily. Arf family.

This chain is ADP-ribosylation factor-like protein 13A (ARL13A), found in Homo sapiens (Human).